A 130-amino-acid chain; its full sequence is Small ribosomal subunit protein uS9 (130 aa).

This sequence belongs to the universal ribosomal protein uS9 family.

The sequence is that of Small ribosomal subunit protein uS9 from Streptococcus uberis (strain ATCC BAA-854 / 0140J).